The following is a 311-amino-acid chain: Aquaporin-1 (311 aa).

Topologically, residues 1 to 16 (MHPQVASLFDNVYEDL) are cytoplasmic. A helical transmembrane segment spans residues 17-37 (AAATLEFIGTAFFLLFGLGGI). The Extracellular segment spans residues 38 to 56 (QASTAEDTASSQPPASGIE). The chain crosses the membrane as a helical span at residues 57 to 77 (HVLYISTCMGFSLVVSAWLFF). Position 78 (Arg-78) is a topological domain, cytoplasmic. A helical transmembrane segment spans residues 79-99 (VTGGLFNPNISFALLLVGGLK). The short motif at 85–87 (NPN) is the NPA 1 element. A topological domain (extracellular) is located at residue Pro-100. A helical membrane pass occupies residues 101–121 (LRFVLFCIAQLTGAIAGAAIV). Residues 122–143 (RGLTSAPLSVNNVLQQGTSAAQ) are Cytoplasmic-facing. Residues 144 to 164 (GVFIEMFITAALVLSVLMLAA) traverse the membrane as a helical segment. Over 165 to 168 (EKHE) the chain is Extracellular. Residues 169–189 (ATPFAPVGIGLTLFACHLFAV) traverse the membrane as a helical segment. Topologically, residues 190–215 (YYTGAAMNSARAFGPAVISGFPEPQH) are cytoplasmic. Positions 197–199 (NSA) match the NPA 2 motif. The chain crosses the membrane as a helical span at residues 216-236 (WVYWVGPFLGSLLGAGFYATL). The Extracellular portion of the chain corresponds to 237–311 (KHYKYWRLNP…TSSRTNFSPV (75 aa)). The segment at 276-311 (DEETRNGCASNEEGVRATGDEKSSNATSSRTNFSPV) is disordered. A compositionally biased stretch (basic and acidic residues) spans 288–298 (EGVRATGDEKS). Positions 299–311 (SNATSSRTNFSPV) are enriched in polar residues. The N-linked (GlcNAc...) asparagine glycan is linked to Asn-300.

The protein belongs to the MIP/aquaporin (TC 1.A.8) family.

The protein resides in the cell membrane. The catalysed reaction is H2O(in) = H2O(out). It carries out the reaction H2O2(out) = H2O2(in). The enzyme catalyses nitric oxide(out) = nitric oxide(in). It catalyses the reaction CO2(out) = CO2(in). Its function is as follows. Water channel required to facilitate the transport of water across membranes. Also mediates the transport nitric oxide, hydrogen peroxide and carbon dioxide across the membrane. Required for Hartig net development in trembling aspen trees. Contributes in fungal cellular processes during the basidiocarp formation. The polypeptide is Aquaporin-1 (Laccaria bicolor (Bicoloured deceiver)).